A 226-amino-acid chain; its full sequence is Probable septum site-determining protein MinC (226 aa).

The protein belongs to the MinC family. In terms of assembly, interacts with MinD and FtsZ.

Cell division inhibitor that blocks the formation of polar Z ring septums. Rapidly oscillates between the poles of the cell to destabilize FtsZ filaments that have formed before they mature into polar Z rings. Prevents FtsZ polymerization. The protein is Probable septum site-determining protein MinC of Edwardsiella ictaluri (strain 93-146).